The following is a 557-amino-acid chain: Nucleoporin AMO1 (557 aa).

Residues 1–25 form a C3H1-type zinc finger; that stretch reads MTVCRFWQQGYCRNGNACKFEHPPK. Residues 114-141 adopt a coiled-coil conformation; sequence QGALNEIQAAYQAAQQQIQNTLQNIPAA. Positions 161 to 297 are disordered; it reads ESSKGSSTGG…SALGPKPGAF (137 aa). 10 SXFG repeats span residues 171-174, 200-203, 213-216, 228-231, 240-243, 249-252, 262-265, 282-285, 303-306, and 314-317; these read SVFG, SAFG, STFG, and SPFG. Positions 195 to 215 are enriched in polar residues; it reads STPSTSAFGQPSPLGQKSSAF. Over residues 243-253 the composition is skewed to polar residues; sequence GSPQTGSTFGQ. Positions 315–463 are disordered; the sequence is PFGAAAQATQ…DLLSYATKNP (149 aa). Composition is skewed to polar residues over residues 321 to 338 and 351 to 366; these read QATQ…QAAN and GQPS…GQPS. 4 SXFG repeats span residues 348 to 351, 370 to 373, 387 to 390, and 407 to 410; these read SAFG and SLFG. Residues 367 to 385 are compositionally biased toward low complexity; sequence TQSSAFGQQQPQQAGTFGS. Residues 388-429 show a composition bias toward polar residues; that stretch reads LFGQQQQQPSNVFGQPSTTSAFGSQAATSGFSQLGNATSTIG. Residues 430-443 show a composition bias toward low complexity; it reads ASPAGAQAPASKSP.

In terms of assembly, the nuclear pore complex (NPC) constitutes the exclusive means of nucleocytoplasmic transport. NPCs allow the passive diffusion of ions and small molecules and the active, nuclear transport receptor-mediated bidirectional transport of macromolecules such as proteins, RNAs, ribonucleoparticles (RNPs), and ribosomal subunits across the nuclear envelope. The 55-60 MDa NPC is composed of at least 28 different subunits: AMO1, ELYS, GLE1, GLE2, MLP1, NDC1, NIC96, NSP1, NUP133, NUP145, NUP152, NUP159, NUP170, NUP188, NUP192, NUP37, NUP49, NUP53, NUP56, NUP57, NUP82, NUP84, NUP85, POM152, POM33, POM34, SEC13 and SEH1. Due to its 8-fold rotational symmetry, all subunits are present with 8 copies or multiples thereof.

Its subcellular location is the nucleus. It localises to the nuclear pore complex. The protein resides in the nucleus membrane. Its function is as follows. Functions as a component of the nuclear pore complex (NPC). NPC components, collectively referred to as nucleoporins (NUPs), can play the role of both NPC structural components and of docking or interaction partners for transiently associated nuclear transport factors. Active directional transport is assured by both, a Phe-Gly (FG) repeat affinity gradient for these transport factors across the NPC and a transport cofactor concentration gradient across the nuclear envelope (GSP1 and GSP2 GTPases associated predominantly with GTP in the nucleus, with GDP in the cytoplasm). AMO1 is specifically important for nuclear protein and mRNA export. The polypeptide is Nucleoporin AMO1 (AMO1) (Chaetomium thermophilum (strain DSM 1495 / CBS 144.50 / IMI 039719) (Thermochaetoides thermophila)).